A 101-amino-acid chain; its full sequence is NADH-quinone oxidoreductase subunit K (101 aa).

3 consecutive transmembrane segments (helical) span residues 4–24 (LADYLILGALLFSLGVAGIFI), 30–50 (LVLLMCIELILLAVNMNFIAF), and 61–81 (VFVFFILTVAAAEAAIGLAIV).

It belongs to the complex I subunit 4L family. As to quaternary structure, NDH-1 is composed of 14 different subunits. Subunits NuoA, H, J, K, L, M, N constitute the membrane sector of the complex.

The protein localises to the cell inner membrane. The enzyme catalyses a quinone + NADH + 5 H(+)(in) = a quinol + NAD(+) + 4 H(+)(out). NDH-1 shuttles electrons from NADH, via FMN and iron-sulfur (Fe-S) centers, to quinones in the respiratory chain. The immediate electron acceptor for the enzyme in this species is believed to be ubiquinone. Couples the redox reaction to proton translocation (for every two electrons transferred, four hydrogen ions are translocated across the cytoplasmic membrane), and thus conserves the redox energy in a proton gradient. This chain is NADH-quinone oxidoreductase subunit K, found in Alkalilimnicola ehrlichii (strain ATCC BAA-1101 / DSM 17681 / MLHE-1).